The sequence spans 808 residues: MLEGHESYDTENFYFREIRKNLQEVDFQWKDGEINYKEGPMTHKNNLTGQRVRHSQGDVENKHMENQLILRFQSGLGELQKFQTAEKIYGCNQIERTVNNCFLASPLQRIFPGVQTNISRKYGNDFLQLSLPTQDEKTHIREKPYIGNECGKAFRVSSSLINHQMIHTTEKPYRCNESGKAFHRGSLLTVHQIVHTRGKPYQCDVCGRIFRQNSDLVNHRRSHTGDKPYICNECGKSFSKSSHLAVHQRIHTGEKPYKCNRCGKCFSQSSSLATHQTVHTGDKPYKCNECGKTFKRNSSLTAHHIIHAGKKPYTCDVCGKVFYQNSQLVRHQIIHTGETPYKCNECGKVFFQRSRLAGHRRIHTGEKPYKCNECGKVFSQHSHLAVHQRVHTGEKPYKCNECGKAFNWGSLLTVHQRIHTGEKPYKCNVCGKVFNYGGYLSVHMRCHTGEKPLHCNKCGMVFTYYSCLARHQRMHTGEKPYKCNVCGKVFIDSGNLSIHRRSHTGEKPFQCNECGKVFSYYSCLARHRKIHTGEKPYKCNDCGKAYTQRSSLTKHLVIHTGENPYHCNEFGEAFIQSSKLARYHRNPTGEKPHKCSECGRTFSHKTSLVYHQRRHTGEMPYKCIECGKVFNSTTTLARHRRIHTGEKPYKCNECGKVFRYRSGLARHWSIHTGEKPYKCNECGKAFRVRSILLNHQMMHTGEKPYKCNECGKAFIERSNLVYHQRNHTGEKPYKCMECGKAFGRRSCLTKHQRIHSSEKPYKCNECGKSYISRSGLTKHQIKHAGENLTTKLNVERPLDVVLTSGIPK.

Lysine 137 participates in a covalent cross-link: Glycyl lysine isopeptide (Lys-Gly) (interchain with G-Cter in SUMO2). A C2H2-type 1; degenerate zinc finger spans residues 145–167 (YIGNECGKAFRVSSSLINHQMIH). The C2H2-type 2; degenerate zinc-finger motif lies at 173–195 (YRCNESGKAFHRGSLLTVHQIVH). 13 C2H2-type zinc fingers span residues 201-223 (YQCDVCGRIFRQNSDLVNHRRSH), 229-251 (YICNECGKSFSKSSHLAVHQRIH), 257-279 (YKCNRCGKCFSQSSSLATHQTVH), 285-307 (YKCNECGKTFKRNSSLTAHHIIH), 313-335 (YTCDVCGKVFYQNSQLVRHQIIH), 341-363 (YKCNECGKVFFQRSRLAGHRRIH), 369-391 (YKCNECGKVFSQHSHLAVHQRVH), 397-419 (YKCNECGKAFNWGSLLTVHQRIH), 425-447 (YKCNVCGKVFNYGGYLSVHMRCH), 453-475 (LHCNKCGMVFTYYSCLARHQRMH), 481-503 (YKCNVCGKVFIDSGNLSIHRRSH), 509-531 (FQCNECGKVFSYYSCLARHRKIH), and 537-559 (YKCNDCGKAYTQRSSLTKHLVIH). Glycyl lysine isopeptide (Lys-Gly) (interchain with G-Cter in SUMO2) cross-links involve residues lysine 554 and lysine 579. A C2H2-type 16; degenerate zinc finger spans residues 565 to 587 (YHCNEFGEAFIQSSKLARYHRNP). C2H2-type zinc fingers lie at residues 593-615 (HKCSECGRTFSHKTSLVYHQRRH), 621-643 (YKCIECGKVFNSTTTLARHRRIH), 649-671 (YKCNECGKVFRYRSGLARHWSIH), 677-699 (YKCNECGKAFRVRSILLNHQMMH), 705-727 (YKCNECGKAFIERSNLVYHQRNH), 733-755 (YKCMECGKAFGRRSCLTKHQRIH), and 761-783 (YKCNECGKSYISRSGLTKHQIKH). Lysine 791 is covalently cross-linked (Glycyl lysine isopeptide (Lys-Gly) (interchain with G-Cter in SUMO2)).

The protein belongs to the krueppel C2H2-type zinc-finger protein family.

It is found in the nucleus. Functionally, may be involved in transcriptional regulation. The chain is Zinc finger protein 841 (ZNF841) from Homo sapiens (Human).